A 225-amino-acid chain; its full sequence is Ribonuclease 3 (225 aa).

The 123-residue stretch at 5–127 folds into the RNase III domain; sequence MNKLTSKLGY…IIGAIYLDSD (123 aa). Glutamate 40 contributes to the Mg(2+) binding site. The active site involves aspartate 44. 2 residues coordinate Mg(2+): aspartate 113 and glutamate 116. Glutamate 116 is an active-site residue. The 71-residue stretch at 154-224 folds into the DRBM domain; the sequence is DPKTRLQEFL…AETALEQLTN (71 aa).

It belongs to the ribonuclease III family. As to quaternary structure, homodimer. The cofactor is Mg(2+).

It is found in the cytoplasm. The enzyme catalyses Endonucleolytic cleavage to 5'-phosphomonoester.. Digests double-stranded RNA. Involved in the processing of primary rRNA transcript to yield the immediate precursors to the large and small rRNAs (23S and 16S). Processes some mRNAs, and tRNAs when they are encoded in the rRNA operon. Processes pre-crRNA and tracrRNA of type II CRISPR loci if present in the organism. The sequence is that of Ribonuclease 3 from Vibrio cholerae serotype O1 (strain ATCC 39315 / El Tor Inaba N16961).